The sequence spans 332 residues: Ferredoxin--NADP reductase 2 (332 aa).

The FAD site is built by glutamate 37, glutamine 45, tyrosine 50, valine 90, phenylalanine 124, aspartate 285, and threonine 326.

This sequence belongs to the ferredoxin--NADP reductase type 2 family. As to quaternary structure, homodimer. FAD is required as a cofactor.

The enzyme catalyses 2 reduced [2Fe-2S]-[ferredoxin] + NADP(+) + H(+) = 2 oxidized [2Fe-2S]-[ferredoxin] + NADPH. This chain is Ferredoxin--NADP reductase 2, found in Bacillus pumilus (strain SAFR-032).